The sequence spans 553 residues: Glutamate--tRNA ligase (553 aa).

The short motif at 98–108 (PNPSGPLHIGH) is the 'HIGH' region element.

The protein belongs to the class-I aminoacyl-tRNA synthetase family. Glutamate--tRNA ligase type 2 subfamily.

The protein localises to the cytoplasm. It catalyses the reaction tRNA(Glu) + L-glutamate + ATP = L-glutamyl-tRNA(Glu) + AMP + diphosphate. Functionally, catalyzes the attachment of glutamate to tRNA(Glu) in a two-step reaction: glutamate is first activated by ATP to form Glu-AMP and then transferred to the acceptor end of tRNA(Glu). The protein is Glutamate--tRNA ligase of Methanocaldococcus jannaschii (strain ATCC 43067 / DSM 2661 / JAL-1 / JCM 10045 / NBRC 100440) (Methanococcus jannaschii).